The following is a 41-amino-acid chain: Large ribosomal subunit protein bL36 (41 aa).

It belongs to the bacterial ribosomal protein bL36 family.

In Rhodopseudomonas palustris (strain TIE-1), this protein is Large ribosomal subunit protein bL36.